The sequence spans 492 residues: MPLYSSQPLKIYNSLSGEKENFKPIHEGNVGMYVCGPTVYSNVHLGNVRTFMSFDVIFRYFLHLDYKVRYVRNITDVGHIVDDVDEGEDKIAKKARLEQLEPMEVVQRYTVDFHDILKAFNFLPPSIEPTATGHIIEQIEIIKKIIDTGIGYEANGSVYFDVVKYNETNNYGVLSGRNIEDMLANTRDLDGQSDKRNPQDFALWKKAEPEHIMRWPSPWSDGFPGWHLECTAMSTKYLGNHFDIHGGGMDLKFPHHECEIAQNEACTGQSPVNYWMHTNMLTLNGKKMAKSTGNNILPGEILSGDNTILSKAFSASVTRFFMLQAHYRSILDFSDDAITAAEKGYKRLMEALEALPAIKAGSSSSVDFAAWKQACYDAMNDDFNTPILIAQLFEAVRYINLLKEGKETISAEDLKSFSTAINAFVFDVLGLSDEKAADGNNDKLEGVVNMLIGMRNQARADKNFALSDQIRDQLIALGIQLKDGKEGTSFSI.

Cysteine 35 serves as a coordination point for Zn(2+). A 'HIGH' region motif is present at residues 37 to 47 (PTVYSNVHLGN). Residues cysteine 230, histidine 255, and glutamate 259 each contribute to the Zn(2+) site. The 'KMSKS' region motif lies at 287–291 (KMAKS). Residue lysine 290 coordinates ATP.

It belongs to the class-I aminoacyl-tRNA synthetase family. As to quaternary structure, monomer. The cofactor is Zn(2+).

It is found in the cytoplasm. It carries out the reaction tRNA(Cys) + L-cysteine + ATP = L-cysteinyl-tRNA(Cys) + AMP + diphosphate. The sequence is that of Cysteine--tRNA ligase from Flavobacterium johnsoniae (strain ATCC 17061 / DSM 2064 / JCM 8514 / BCRC 14874 / CCUG 350202 / NBRC 14942 / NCIMB 11054 / UW101) (Cytophaga johnsonae).